The chain runs to 187 residues: Ribonuclease HII (187 aa).

Residues 1-187 (MICGTDEAGR…NPVKRLLANL (187 aa)) enclose the RNase H type-2 domain. Residues Asp6, Glu7, and Asp98 each contribute to the a divalent metal cation site.

It belongs to the RNase HII family. The cofactor is Mn(2+). Mg(2+) serves as cofactor.

It is found in the cytoplasm. It catalyses the reaction Endonucleolytic cleavage to 5'-phosphomonoester.. Functionally, endonuclease that specifically degrades the RNA of RNA-DNA hybrids. In Idiomarina loihiensis (strain ATCC BAA-735 / DSM 15497 / L2-TR), this protein is Ribonuclease HII.